The chain runs to 510 residues: Ankyrin repeat domain-containing protein 13C-A (510 aa).

Residues 1–19 (MTGEKIRSLHKDQKPSKDE) show a composition bias toward basic and acidic residues. The interval 1 to 35 (MTGEKIRSLHKDQKPSKDEDLLEPDEEATAGGTFT) is disordered. ANK repeat units lie at residues 80–111 (DVYFPVHECVLKGDIRRLSSLIRSHSIGQKDS), 112–141 (HGNTPLHLAVMLGNKECAHLLLAHNAPVKV), and 145–174 (QGWSPLAEAISYGDRQMITALLRKLKQQSR).

Its subcellular location is the endoplasmic reticulum membrane. In terms of biological role, acts as a molecular chaperone for G protein-coupled receptors, regulating their biogenesis and exit from the ER. In Xenopus laevis (African clawed frog), this protein is Ankyrin repeat domain-containing protein 13C-A (ankrd13c-a).